Here is a 316-residue protein sequence, read N- to C-terminus: HPr kinase/phosphorylase (316 aa).

Catalysis depends on residues His-143 and Lys-164. 158 to 165 (GEAGSGKS) contributes to the ATP binding site. Residue Ser-165 participates in Mg(2+) binding. The active-site Proton acceptor; for phosphorylation activity. Proton donor; for dephosphorylation activity is Asp-182. An important for the catalytic mechanism of both phosphorylation and dephosphorylation region spans residues 206–215 (LEVRGLGVLN). Residue Glu-207 participates in Mg(2+) binding. The active site involves Arg-251. Residues 272–277 (PVMPGR) form an important for the catalytic mechanism of dephosphorylation region.

It belongs to the HPrK/P family. In terms of assembly, homohexamer. It depends on Mg(2+) as a cofactor.

It carries out the reaction [HPr protein]-L-serine + ATP = [HPr protein]-O-phospho-L-serine + ADP + H(+). The catalysed reaction is [HPr protein]-O-phospho-L-serine + phosphate + H(+) = [HPr protein]-L-serine + diphosphate. Catalyzes the ATP- as well as the pyrophosphate-dependent phosphorylation of a specific serine residue in HPr, a phosphocarrier protein of the phosphoenolpyruvate-dependent sugar phosphotransferase system (PTS). HprK/P also catalyzes the pyrophosphate-producing, inorganic phosphate-dependent dephosphorylation (phosphorolysis) of seryl-phosphorylated HPr (P-Ser-HPr). The chain is HPr kinase/phosphorylase from Stenotrophomonas maltophilia (strain R551-3).